The primary structure comprises 461 residues: Toxin CfTX-B (461 aa).

The N-terminal stretch at 1–24 (MDPRISSRLRALALLVFVISITDG) is a signal peptide. Residues 25–31 (IPNRAKR) constitute a propeptide that is removed on maturation.

The protein belongs to the jellyfish toxin family. Type II subfamily. As to quaternary structure, oligomer. Contains 2 disulfide bonds. Nematocytes.

The protein resides in the secreted. It localises to the nematocyst. Its subcellular location is the target cell membrane. In terms of biological role, the fraction containing this toxin and CfTX-B shows potent hemolytic activity. This fraction causes minor effects on the cardiovascular system of anesthetized rats (at 25 ug/kg), since it has no significant effects on heart rate but produces relatively small increases in mean arterial pressure. The chain is Toxin CfTX-B from Chironex fleckeri (Australian box jellyfish).